The chain runs to 412 residues: Tyrosine--tRNA ligase (412 aa).

L-tyrosine is bound at residue Y41. The 'HIGH' region signature appears at 46-55; sequence ATADSLHVGH. Positions 174 and 178 each coordinate L-tyrosine. Positions 234-238 match the 'KMSKS' region motif; that stretch reads KMGKS. K237 is an ATP binding site. The region spanning 348–411 is the S4 RNA-binding domain; sequence LSLTDLLLEH…KKQHLHLRLE (64 aa).

Belongs to the class-I aminoacyl-tRNA synthetase family. TyrS type 1 subfamily. In terms of assembly, homodimer.

The protein localises to the cytoplasm. The enzyme catalyses tRNA(Tyr) + L-tyrosine + ATP = L-tyrosyl-tRNA(Tyr) + AMP + diphosphate + H(+). Catalyzes the attachment of tyrosine to tRNA(Tyr) in a two-step reaction: tyrosine is first activated by ATP to form Tyr-AMP and then transferred to the acceptor end of tRNA(Tyr). This Pseudomonas aeruginosa (strain LESB58) protein is Tyrosine--tRNA ligase.